Reading from the N-terminus, the 203-residue chain is Small ribosomal subunit protein uS5 (203 aa).

Residues 49 to 112 (FEERVVKIKR…KNANNNLIKV (64 aa)) form the S5 DRBM domain.

Belongs to the universal ribosomal protein uS5 family. In terms of assembly, part of the 30S ribosomal subunit. Contacts proteins S4 and S8.

In terms of biological role, with S4 and S12 plays an important role in translational accuracy. Functionally, located at the back of the 30S subunit body where it stabilizes the conformation of the head with respect to the body. In Ureaplasma parvum serovar 3 (strain ATCC 700970), this protein is Small ribosomal subunit protein uS5.